A 210-amino-acid chain; its full sequence is Thymidylate kinase (210 aa).

11–18 (GVDGAGKT) contributes to the ATP binding site.

The protein belongs to the thymidylate kinase family.

The enzyme catalyses dTMP + ATP = dTDP + ADP. Phosphorylation of dTMP to form dTDP in both de novo and salvage pathways of dTTP synthesis. The chain is Thymidylate kinase (tmk) from Mycoplasma genitalium (strain ATCC 33530 / DSM 19775 / NCTC 10195 / G37) (Mycoplasmoides genitalium).